We begin with the raw amino-acid sequence, 142 residues long: Large ribosomal subunit protein uL13 (142 aa).

Belongs to the universal ribosomal protein uL13 family. Part of the 50S ribosomal subunit.

This protein is one of the early assembly proteins of the 50S ribosomal subunit, although it is not seen to bind rRNA by itself. It is important during the early stages of 50S assembly. This chain is Large ribosomal subunit protein uL13, found in Dechloromonas aromatica (strain RCB).